A 399-amino-acid polypeptide reads, in one-letter code: Acetate kinase (399 aa).

Residue Asn9 coordinates Mg(2+). Lys16 lines the ATP pocket. Arg90 provides a ligand contact to substrate. Asp147 acts as the Proton donor/acceptor in catalysis. ATP-binding positions include 207 to 211, 281 to 283, and 333 to 337; these read HLGNG, DFR, and GVGEN. Glu387 contributes to the Mg(2+) binding site.

It belongs to the acetokinase family. In terms of assembly, homodimer. Requires Mg(2+) as cofactor. It depends on Mn(2+) as a cofactor.

It localises to the cytoplasm. The catalysed reaction is acetate + ATP = acetyl phosphate + ADP. Its pathway is metabolic intermediate biosynthesis; acetyl-CoA biosynthesis; acetyl-CoA from acetate: step 1/2. In terms of biological role, catalyzes the formation of acetyl phosphate from acetate and ATP. Can also catalyze the reverse reaction. This Mycobacterium sp. (strain JLS) protein is Acetate kinase.